Consider the following 259-residue polypeptide: Major prion protein (259 aa).

The N-terminal stretch at 1 to 24 (MGKIQLGYWILVLFIVTWSDLGLC) is a signal peptide. Residues 25–235 (KKPKPRPGGG…EYEAAAQRAY (211 aa)) form an interaction with GRB2, ERI3 and SYN1 region. Positions 29–110 (PRPGGGWNSG…GYNKWKPDKP (82 aa)) are disordered. 8 residues coordinate Cu(2+): glycine 63, glycine 64, histidine 72, glycine 74, histidine 82, glycine 84, histidine 92, and glycine 94. Residues 91–101 (PHGGSNWGQGG) show a composition bias toward gly residues. A disulfide bond links cysteine 184 and cysteine 219. Asparagine 186 and asparagine 202 each carry an N-linked (GlcNAc...) asparagine glycan. A lipid anchor (GPI-anchor amidated asparagine) is attached at asparagine 236. A propeptide spans 237 to 259 (MAFFSAPPVTLLFLSFLIFLIVS) (removed in mature form).

The protein belongs to the prion family. In terms of assembly, monomer and homodimer. Has a tendency to aggregate into amyloid fibrils containing a cross-beta spine, formed by a steric zipper of superposed beta-strands. Soluble oligomers may represent an intermediate stage on the path to fibril formation. Copper binding may promote oligomerization. Interacts with GRB2, APP, ERI3/PRNPIP and SYN1. Mislocalized cytosolically exposed PrP interacts with MGRN1; this interaction alters MGRN1 subcellular location and causes lysosomal enlargement. Interacts with KIAA1191.

The protein resides in the cell membrane. Its subcellular location is the golgi apparatus. Functionally, its primary physiological function is unclear. Has cytoprotective activity against internal or environmental stresses. May play a role in neuronal development and synaptic plasticity. May be required for neuronal myelin sheath maintenance. May play a role in iron uptake and iron homeostasis. Soluble oligomers are toxic to cultured neuroblastoma cells and induce apoptosis (in vitro). Association with GPC1 (via its heparan sulfate chains) targets PRNP to lipid rafts. Also provides Cu(2+) or Zn(2+) for the ascorbate-mediated GPC1 deaminase degradation of its heparan sulfate side chains. The polypeptide is Major prion protein (PRNP) (Trichosurus vulpecula (Brush-tailed possum)).